Reading from the N-terminus, the 128-residue chain is S-adenosylmethionine decarboxylase proenzyme (128 aa).

The active-site Schiff-base intermediate with substrate; via pyruvic acid is S63. S63 carries the post-translational modification Pyruvic acid (Ser); by autocatalysis. H68 serves as the catalytic Proton acceptor; for processing activity. C83 functions as the Proton donor; for catalytic activity in the catalytic mechanism.

This sequence belongs to the prokaryotic AdoMetDC family. Type 1 subfamily. Heterotetramer of two alpha and two beta chains arranged as a dimer of alpha/beta heterodimers. Requires pyruvate as cofactor. Is synthesized initially as an inactive proenzyme. Formation of the active enzyme involves a self-maturation process in which the active site pyruvoyl group is generated from an internal serine residue via an autocatalytic post-translational modification. Two non-identical subunits are generated from the proenzyme in this reaction, and the pyruvate is formed at the N-terminus of the alpha chain, which is derived from the carboxyl end of the proenzyme. The post-translation cleavage follows an unusual pathway, termed non-hydrolytic serinolysis, in which the side chain hydroxyl group of the serine supplies its oxygen atom to form the C-terminus of the beta chain, while the remainder of the serine residue undergoes an oxidative deamination to produce ammonia and the pyruvoyl group blocking the N-terminus of the alpha chain.

The enzyme catalyses S-adenosyl-L-methionine + H(+) = S-adenosyl 3-(methylsulfanyl)propylamine + CO2. It functions in the pathway amine and polyamine biosynthesis; S-adenosylmethioninamine biosynthesis; S-adenosylmethioninamine from S-adenosyl-L-methionine: step 1/1. Catalyzes the decarboxylation of S-adenosylmethionine to S-adenosylmethioninamine (dcAdoMet), the propylamine donor required for the synthesis of the polyamines spermine and spermidine from the diamine putrescine. The sequence is that of S-adenosylmethionine decarboxylase proenzyme from Leptospira borgpetersenii serovar Hardjo-bovis (strain JB197).